Consider the following 424-residue polypeptide: Synaptotagmin-1 (424 aa).

Over Met-1 to Pro-60 the chain is Vesicular. N-linked (GlcNAc...) asparagine glycosylation is present at Asn-25. The chain crosses the membrane as a helical span at residues Trp-61 to Cys-82. S-palmitoyl cysteine attachment occurs at residues Cys-77, Cys-78, Cys-80, Cys-82, and Cys-85. At Lys-83–Lys-424 the chain is on the cytoplasmic side. A disordered region spans residues Lys-117–Val-142. Positions Asp-124–Lys-136 are enriched in acidic residues. A phospholipid binding region spans residues Glu-138–Asn-384. 2 consecutive C2 domains span residues Lys-144–Arg-263 and Lys-275–His-408. 14 residues coordinate Ca(2+): Leu-174, Asp-175, Asp-181, Asp-233, Phe-234, Asp-235, Ser-238, Lys-239, Asp-241, Asp-306, Asp-312, Asp-366, Asp-368, and Asp-374.

The protein belongs to the synaptotagmin family. As to quaternary structure, homotetramer. It depends on Ca(2+) as a cofactor.

Its subcellular location is the cytoplasmic vesicle. The protein resides in the secretory vesicle membrane. It is found in the secretory vesicle. It localises to the synaptic vesicle membrane. The protein localises to the chromaffin granule membrane. Its subcellular location is the cytoplasm. In terms of biological role, calcium sensor that participates in triggering neurotransmitter release at the synapse. May have a regulatory role in the membrane interactions during trafficking of synaptic vesicles at the active zone of the synapse. It binds acidic phospholipids with a specificity that requires the presence of both an acidic head group and a diacyl backbone. May play a role in dendrite formation by melanocytes. In Gallus gallus (Chicken), this protein is Synaptotagmin-1 (SYT1).